The sequence spans 550 residues: Hydroxylamine reductase (550 aa).

[2Fe-2S] cluster is bound by residues C3, C6, C18, and C25. The hybrid [4Fe-2O-2S] cluster site is built by H249, E273, C317, C405, C433, C458, E492, and K494. C405 carries the cysteine persulfide modification.

Belongs to the HCP family. [2Fe-2S] cluster is required as a cofactor. Requires hybrid [4Fe-2O-2S] cluster as cofactor.

The protein resides in the cytoplasm. It carries out the reaction A + NH4(+) + H2O = hydroxylamine + AH2 + H(+). Its function is as follows. Catalyzes the reduction of hydroxylamine to form NH(3) and H(2)O. The sequence is that of Hydroxylamine reductase from Escherichia coli O7:K1 (strain IAI39 / ExPEC).